The chain runs to 395 residues: MVGTWFLCRGFTTLAGLLLLPFGSLAASQIEDQAEQFFRSGHTNNWAVLVCTSRFWFNYRHVANTLSVYRSVKRLGIPDSHIVLMLADDMACNPRNPKPATVYSHKNMELNVYGDDVEVDYRSYVVTVENFLRVLTGRIPPSTPRSKRLLSDDRSNILIYMTGHGGNGFLKFQDSEEITNIELADAFEQMWQKRRYNELLFIIDTCQGASMYERFYSPNIMALASSQVGEDSLSHQPDPAIGVHLMDRYTFYVLEFLEEINPASQTNMNDLFQVCPKSLCVSTPGHRTDPFQRDPKHVLITDFFGSVRKVEITTETISLQPDSGIMKSSHEKAGMDEELMEPLKYAEQLPVAQIIHQKPKLKDWHPPGGFILGLWALIIMVFFKTYGIKHMKFIF.

A signal peptide spans 1–27; the sequence is MVGTWFLCRGFTTLAGLLLLPFGSLAA. The Lumenal segment spans residues 28 to 368; it reads SQIEDQAEQF…PKLKDWHPPG (341 aa). The Ca(2+) site is built by aspartate 79, isoleucine 82, glutamate 118, and aspartate 120. The Proton donor role is filled by histidine 164. Cysteine 206 serves as the catalytic Nucleophile; acyl-thioester intermediate. Residues cysteine 206, serine 232, and serine 234 each coordinate a protein. An autoinhibitory loop region spans residues 231 to 236; the sequence is DSLSHQ. A disulfide bond links cysteine 275 and cysteine 280. The chain crosses the membrane as a helical span at residues 369–385; it reads GFILGLWALIIMVFFKT. Residues 386–395 lie on the Cytoplasmic side of the membrane; the sequence is YGIKHMKFIF.

It belongs to the peptidase C13 family. In terms of assembly, heteropentamer. Part of the GPI-anchor transamidase complex, consisting of PIGK, PIGT, PIGS, PIGU and GAA1. Interacts with GPAA1. Interacts with PIGT; this interaction, via a disulfide link, stabilizes the expression of GAA1 and PIGK and links them to PIGS. The disulfide bond between PIGK/GPI8 and PIGT is important for normal enzyme activity.

It localises to the endoplasmic reticulum membrane. It participates in glycolipid biosynthesis; glycosylphosphatidylinositol-anchor biosynthesis. Its activity is regulated as follows. In the absence of proproteins substrates, exists in an inactive state with a disrupted catalytic site by an autoinhibitory loop. The binding of proprotein substrates, particularly the CSP region, to GPI-T triggers concerted conformational changes that alleviate the inhibition by the autoinhibitory loop. Meanwhile, proprotein residues near the omega- site induce the formation of a catalytic cleft for catalysis, following which the products are released and GPI-T reverts to the inactive state. Functionally, catalytic subunit of the glycosylphosphatidylinositol-anchor (GPI-anchor) transamidase (GPI-T) complex that catalyzes the formation of the linkage between a proprotein and a GPI-anchor and participates in GPI anchored protein biosynthesis. Recognizes diverse proproteins at a C-terminal signal peptide (CSP) region that lacks consensus sequence and replaces it with a GPI-anchor via a transamidation reaction. Transamidation catalysis reaction follows a two-phase mechanism. In the acyl-enzyme phase, the carbonyl group of the proproteins's omega-site undergoes a nucleophilic attack forming an enzyme-substrate thioester bond. Followed by a general acid catalysis that allows CSP releasing, regenerating the carbonyl, and forming the acyl-enzyme intermediate. In the GPI-anchor attachment phase, the amino group of the GPI-anchor's ethanolamine phosphate, the one on third mannose (EtNP3), mediates a nucleophilic attack on the carbonyl of the acyl-enzyme intermediate, replacing the CSP, allowing GPI-anchor attachment to the omega-residue, therefore forming the product and freeing the enzyme. This is GPI-anchor transamidase from Sus scrofa (Pig).